Here is a 409-residue protein sequence, read N- to C-terminus: Evolutionarily conserved signaling intermediate in Toll pathway, mitochondrial (409 aa).

Residues 1–26 constitute a mitochondrion transit peptide; the sequence is MLRRAQCLLRLHGNGGHSLVSRFRNY. 2 disordered regions span residues 27 to 53 and 383 to 409; these read ATDE…NLPA and EEIE…SRQK. A compositionally biased stretch (basic and acidic residues) spans 400 to 409; sequence QDEHISSRQK.

Belongs to the ECSIT family. Interacts with Traf6. Associates with mitochondrial complex I assembly intermediates during its biogenesis.

It is found in the cytoplasm. The protein resides in the nucleus. The protein localises to the mitochondrion. Functionally, as part of the MCIA complex, involved in the assembly of the mitochondrial complex I. Involved in the innate immune response; promotes the production of antibacterial peptides. This Drosophila melanogaster (Fruit fly) protein is Evolutionarily conserved signaling intermediate in Toll pathway, mitochondrial.